We begin with the raw amino-acid sequence, 422 residues long: Histidine--tRNA ligase (422 aa).

This sequence belongs to the class-II aminoacyl-tRNA synthetase family. As to quaternary structure, homodimer.

It localises to the cytoplasm. The catalysed reaction is tRNA(His) + L-histidine + ATP = L-histidyl-tRNA(His) + AMP + diphosphate + H(+). The sequence is that of Histidine--tRNA ligase from Alcanivorax borkumensis (strain ATCC 700651 / DSM 11573 / NCIMB 13689 / SK2).